Consider the following 357-residue polypeptide: Peptide chain release factor 1 (357 aa).

Position 233 is an N5-methylglutamine (Gln233). The tract at residues 284–305 (RSASISADRKSQVGTGDRSERI) is disordered.

This sequence belongs to the prokaryotic/mitochondrial release factor family. In terms of processing, methylated by PrmC. Methylation increases the termination efficiency of RF1.

The protein localises to the cytoplasm. Functionally, peptide chain release factor 1 directs the termination of translation in response to the peptide chain termination codons UAG and UAA. The sequence is that of Peptide chain release factor 1 from Clostridium novyi (strain NT).